A 287-amino-acid polypeptide reads, in one-letter code: Lipoyl synthase (287 aa).

Positions 34, 39, 45, 60, 64, 67, and 273 each coordinate [4Fe-4S] cluster. Residues 46 to 262 (WNKRHATVMI…KYIAYSKGFL (217 aa)) enclose the Radical SAM core domain.

It belongs to the radical SAM superfamily. Lipoyl synthase family. It depends on [4Fe-4S] cluster as a cofactor.

It localises to the cytoplasm. The enzyme catalyses [[Fe-S] cluster scaffold protein carrying a second [4Fe-4S](2+) cluster] + N(6)-octanoyl-L-lysyl-[protein] + 2 oxidized [2Fe-2S]-[ferredoxin] + 2 S-adenosyl-L-methionine + 4 H(+) = [[Fe-S] cluster scaffold protein] + N(6)-[(R)-dihydrolipoyl]-L-lysyl-[protein] + 4 Fe(3+) + 2 hydrogen sulfide + 2 5'-deoxyadenosine + 2 L-methionine + 2 reduced [2Fe-2S]-[ferredoxin]. Its pathway is protein modification; protein lipoylation via endogenous pathway; protein N(6)-(lipoyl)lysine from octanoyl-[acyl-carrier-protein]: step 2/2. Catalyzes the radical-mediated insertion of two sulfur atoms into the C-6 and C-8 positions of the octanoyl moiety bound to the lipoyl domains of lipoate-dependent enzymes, thereby converting the octanoylated domains into lipoylated derivatives. The protein is Lipoyl synthase of Wolbachia sp. subsp. Brugia malayi (strain TRS).